The primary structure comprises 545 residues: 2-succinyl-5-enolpyruvyl-6-hydroxy-3-cyclohexene-1-carboxylate synthase (545 aa).

Residues 170-185 are compositionally biased toward polar residues; sequence QVSGLQRSAPAPSSDS. The interval 170–193 is disordered; the sequence is QVSGLQRSAPAPSSDSPLGAAPQL.

The protein belongs to the TPP enzyme family. MenD subfamily. Homodimer. Mg(2+) serves as cofactor. Requires Mn(2+) as cofactor. Thiamine diphosphate is required as a cofactor.

The catalysed reaction is isochorismate + 2-oxoglutarate + H(+) = 5-enolpyruvoyl-6-hydroxy-2-succinyl-cyclohex-3-ene-1-carboxylate + CO2. It functions in the pathway quinol/quinone metabolism; 1,4-dihydroxy-2-naphthoate biosynthesis; 1,4-dihydroxy-2-naphthoate from chorismate: step 2/7. The protein operates within cofactor biosynthesis; phylloquinone biosynthesis. Catalyzes the thiamine diphosphate-dependent decarboxylation of 2-oxoglutarate and the subsequent addition of the resulting succinic semialdehyde-thiamine pyrophosphate anion to isochorismate to yield 2-succinyl-5-enolpyruvyl-6-hydroxy-3-cyclohexene-1-carboxylate (SEPHCHC). In Parasynechococcus marenigrum (strain WH8102), this protein is 2-succinyl-5-enolpyruvyl-6-hydroxy-3-cyclohexene-1-carboxylate synthase.